The sequence spans 740 residues: MFSTTTHSVPYLYLGNFSRKPHYYSVNRTKLHGSAGAARLSKSTSTSSRSHDLVLDLRNLLSRSSASIQGMVERAARLNGILDRRLVDDVLAKVTSMLPSMRDVRVTLEESATQIGRVQLQNYQFEVSLTGAAGSVPTGANVKVIPTITPGLLRPLFSQQQLNQIRGFKTDRSIEAEQKRNPTMTSRLKNALANSPQRLDGDTPLQAEKLRRLLAKSEEHGFNKAESLKIAFAEGYLAAANSEDSPKSGKTMKYLKTLQTIVVIVVFLGIFLSFFTTSNGSVFRSIQLGNQVEVDPEEINVTFEDVKGCDEAKQELKEVVEFLKSPEKFSNLGGKLPKGVLLVGPPGTGKTLLARAVAGEAKVPFFHAAGPEFDEVLVGQGARRVRDLFKAAKARAPCVIFIDEIDSVGAKRTNSVLHPYANQTINQLLSEMDGFHQNAGVIVLGATNRRDDLDQALLRPGRFDVEVMVSTPDFTGRKEILSLYLTKILHDEIDLDMLARGTSGFTGADLENMINQAALRAAIDGAETVSMKHLETARDKVLMGPERKARLPDEEANTITAYHEGGHAIVAFYTKESHPLHKVTIMPRGPSLGHTAYIPEKERYHVTKAQLLAMMDTMMGGRAAEELVFGTDKITSGASSDLKQATSIATHMVRDWGMSDKVGLRTIEASKGLGTGDTLGPNTIEAVDAEIKRILSDSYERAKAILRKHTREHKALAEALLKYETLDADDIKAILNESQT.

Residues 1-256 (MFSTTTHSVP…KSGKTMKYLK (256 aa)) lie on the Mitochondrial matrix side of the membrane. The helical transmembrane segment at 257–277 (TLQTIVVIVVFLGIFLSFFTT) threads the bilayer. Over 278–740 (SNGSVFRSIQ…IKAILNESQT (463 aa)) the chain is Mitochondrial intermembrane. 347-351 (GTGKT) is a binding site for ATP. Residue histidine 563 participates in Zn(2+) binding. Residue glutamate 564 is part of the active site. Residues histidine 567 and aspartate 641 each contribute to the Zn(2+) site.

It in the N-terminal section; belongs to the AAA ATPase family. The protein in the C-terminal section; belongs to the peptidase M41 family. The cofactor is Zn(2+).

The protein localises to the mitochondrion inner membrane. ATP-dependent metalloprotease that catalyzes the degradation of folded and unfolded proteins with a suitable degron sequence in the mitochondrial intermembrane region. Plays an important role in regulating mitochondrial morphology and function by cleaving Opa1, giving rise to a form of Opa1 that promotes maintenance of normal mitochondrial structure and mitochondrial protein metabolism. Ensures cell proliferation, maintains normal cristae morphology and complex I respiration activity, promotes antiapoptotic activity and protects mitochondria from the accumulation of oxidatively damaged membrane proteins. Required to control the accumulation of nonassembled respiratory chain subunits such as ND-30. In Drosophila melanogaster (Fruit fly), this protein is ATP-dependent zinc metalloprotease YME1L.